A 142-amino-acid polypeptide reads, in one-letter code: Hemoglobin subunit alpha (142 aa).

A Globin domain is found at 1 to 142 (VLSAADKNNV…VSTVLTSKYR (142 aa)). S3 is modified (phosphoserine). Residues K7 and K11 each carry the N6-succinyllysine modification. At K16 the chain carries N6-acetyllysine; alternate. Residue K16 is modified to N6-succinyllysine; alternate. At Y24 the chain carries Phosphotyrosine. The residue at position 35 (S35) is a Phosphoserine. The residue at position 40 (K40) is an N6-succinyllysine. H58 serves as a coordination point for O2. H87 is a heme b binding site. Residue S102 is modified to Phosphoserine. Position 108 is a phosphothreonine (T108). S125 bears the Phosphoserine mark. 2 positions are modified to phosphothreonine: T135 and T138. S139 is modified (phosphoserine).

The protein belongs to the globin family. In terms of assembly, heterotetramer of two alpha chains and two beta chains. As to expression, red blood cells.

Involved in oxygen transport from the lung to the various peripheral tissues. Functionally, hemopressin acts as an antagonist peptide of the cannabinoid receptor CNR1. Hemopressin-binding efficiently blocks cannabinoid receptor CNR1 and subsequent signaling. The chain is Hemoglobin subunit alpha (HBA) from Procavia capensis habessinica (Abyssinian hyrax).